Consider the following 219-residue polypeptide: uncharacterized protein (219 aa).

The region spanning 30 to 107 (FRLFVGNLGN…RPVKLSRATS (78 aa)) is the RRM domain. Positions 140–149 (KKIKNKHGKN) are enriched in basic residues. The disordered stretch occupies residues 140–219 (KKIKNKHGKN…YSRASSFRRV (80 aa)). Residues 150–169 (SSKSSRAAQSAAAELISSSS) show a composition bias toward low complexity. A compositionally biased stretch (polar residues) spans 176 to 186 (ANSTSVPNAVN).

This is an uncharacterized protein from Schizosaccharomyces pombe (strain 972 / ATCC 24843) (Fission yeast).